A 646-amino-acid chain; its full sequence is UvrABC system protein B (646 aa).

Residues leucine 29 to arginine 411 form the Helicase ATP-binding domain. ATP is bound at residue glycine 42–threonine 49. The Beta-hairpin motif lies at tyrosine 95 to isoleucine 118. In terms of domain architecture, Helicase C-terminal spans glutamine 428–isoleucine 590. Residues proline 609–lysine 644 form the UVR domain.

Belongs to the UvrB family. As to quaternary structure, forms a heterotetramer with UvrA during the search for lesions. Interacts with UvrC in an incision complex.

The protein resides in the cytoplasm. The UvrABC repair system catalyzes the recognition and processing of DNA lesions. A damage recognition complex composed of 2 UvrA and 2 UvrB subunits scans DNA for abnormalities. Upon binding of the UvrA(2)B(2) complex to a putative damaged site, the DNA wraps around one UvrB monomer. DNA wrap is dependent on ATP binding by UvrB and probably causes local melting of the DNA helix, facilitating insertion of UvrB beta-hairpin between the DNA strands. Then UvrB probes one DNA strand for the presence of a lesion. If a lesion is found the UvrA subunits dissociate and the UvrB-DNA preincision complex is formed. This complex is subsequently bound by UvrC and the second UvrB is released. If no lesion is found, the DNA wraps around the other UvrB subunit that will check the other stand for damage. The polypeptide is UvrABC system protein B (Methanococcus maripaludis (strain DSM 14266 / JCM 13030 / NBRC 101832 / S2 / LL)).